Consider the following 267-residue polypeptide: 2-keto-3-deoxy-L-rhamnonate aldolase (267 aa).

The active-site Proton acceptor is histidine 49. Residue glutamine 151 coordinates substrate. Glutamate 153 lines the Mg(2+) pocket. Substrate is bound by residues alanine 178 and aspartate 179. Position 179 (aspartate 179) interacts with Mg(2+).

It belongs to the HpcH/HpaI aldolase family. KDR aldolase subfamily. Homohexamer. Mg(2+) serves as cofactor.

The enzyme catalyses 2-dehydro-3-deoxy-L-rhamnonate = (S)-lactaldehyde + pyruvate. In terms of biological role, catalyzes the reversible retro-aldol cleavage of 2-keto-3-deoxy-L-rhamnonate (KDR) to pyruvate and lactaldehyde. The protein is 2-keto-3-deoxy-L-rhamnonate aldolase of Shigella sonnei (strain Ss046).